The sequence spans 285 residues: Golgi phosphoprotein 3-like (285 aa).

The interval 1 to 43 is disordered; that stretch reads MTTLTHRTRRTEVSKSCEKKIESEEDTNQERSPDNEDPGDSKD. Residues 10-43 show a composition bias toward basic and acidic residues; sequence RTEVSKSCEKKIESEEDTNQERSPDNEDPGDSKD. A 1,2-diacyl-sn-glycero-3-phospho-(1D-myo-inositol 4-phosphate) is bound by residues tryptophan 67 and arginine 76. Serine 112 carries the post-translational modification Phosphoserine. The a 1,2-diacyl-sn-glycero-3-phospho-(1D-myo-inositol 4-phosphate) site is built by arginine 157 and arginine 160. The beta-hairpin required for oligomerization stretch occupies residues 176-187; it reads EKQNFLLFDMTT.

The protein belongs to the GOLPH3/VPS74 family. Homooligomer. Does not interact MYO18; differs from GOLPH3 by its inability to interact with MYO18. May interact with ARF1.

Its subcellular location is the golgi apparatus. It localises to the golgi stack membrane. The protein resides in the trans-Golgi network membrane. Functionally, phosphatidylinositol-4-phosphate-binding protein that may antagonize the action of GOLPH3 which is required for the process of vesicle budding at the Golgi and anterograde transport to the plasma membrane. In Rattus norvegicus (Rat), this protein is Golgi phosphoprotein 3-like (Golph3l).